A 341-amino-acid chain; its full sequence is Anthranilate phosphoribosyltransferase (341 aa).

Residues G79, 82-83 (GD), T87, 89-92 (NIST), 107-115 (KHGGRSVSS), and S119 each bind 5-phospho-alpha-D-ribose 1-diphosphate. G79 provides a ligand contact to anthranilate. S91 contributes to the Mg(2+) binding site. R165 is a binding site for anthranilate. The Mg(2+) site is built by D224 and E225.

It belongs to the anthranilate phosphoribosyltransferase family. As to quaternary structure, homodimer. Mg(2+) is required as a cofactor.

The catalysed reaction is N-(5-phospho-beta-D-ribosyl)anthranilate + diphosphate = 5-phospho-alpha-D-ribose 1-diphosphate + anthranilate. It participates in amino-acid biosynthesis; L-tryptophan biosynthesis; L-tryptophan from chorismate: step 2/5. Functionally, catalyzes the transfer of the phosphoribosyl group of 5-phosphorylribose-1-pyrophosphate (PRPP) to anthranilate to yield N-(5'-phosphoribosyl)-anthranilate (PRA). The polypeptide is Anthranilate phosphoribosyltransferase (Ruminiclostridium cellulolyticum (strain ATCC 35319 / DSM 5812 / JCM 6584 / H10) (Clostridium cellulolyticum)).